Reading from the N-terminus, the 514-residue chain is Respiratory nitrate reductase 2 beta chain (514 aa).

4Fe-4S ferredoxin-type domains are found at residues 7 to 35 (VGMV…GREG), 174 to 205 (TFMM…KREE), and 207 to 236 (GIVL…FNWK). [4Fe-4S] cluster-binding residues include Cys-16, Cys-19, Cys-22, Cys-26, Cys-183, Cys-186, and Cys-191. Cys-195, Cys-216, and Cys-222 together coordinate [3Fe-4S] cluster. [4Fe-4S] cluster-binding residues include Cys-226, Cys-243, Cys-246, Cys-258, and Cys-262.

As to quaternary structure, dimer of heterotrimers each composed of an alpha, a beta and a gamma chain. Alpha and beta are catalytic chains; gamma chains are involved in binding the enzyme complex to the cytoplasmic membrane. It depends on [4Fe-4S] cluster as a cofactor. [3Fe-4S] cluster serves as cofactor.

It is found in the cell membrane. The catalysed reaction is nitrate + a quinol = a quinone + nitrite + H2O. Its function is as follows. This is a second nitrate reductase enzyme which can substitute for the NRA enzyme and allows E.coli to use nitrate as an electron acceptor during anaerobic growth. The beta chain is an electron transfer unit containing four cysteine clusters involved in the formation of iron-sulfur centers. Electrons are transferred from the gamma chain to the molybdenum cofactor of the alpha subunit. The protein is Respiratory nitrate reductase 2 beta chain (narY) of Escherichia coli (strain K12).